The sequence spans 93 residues: Large ribosomal subunit protein uL23 (93 aa).

Belongs to the universal ribosomal protein uL23 family. In terms of assembly, part of the 50S ribosomal subunit. Contacts protein L29, and trigger factor when it is bound to the ribosome.

In terms of biological role, one of the early assembly proteins it binds 23S rRNA. One of the proteins that surrounds the polypeptide exit tunnel on the outside of the ribosome. Forms the main docking site for trigger factor binding to the ribosome. The polypeptide is Large ribosomal subunit protein uL23 (Aliarcobacter butzleri (strain RM4018) (Arcobacter butzleri)).